A 327-amino-acid polypeptide reads, in one-letter code: MEEIEESPPTSEELVPCKICGRSFFPKVLKKHVPICQKTAAKRRKVFDSGRQRAEGTEISTVKPIKPKLQSSSSSSKSDKPEPPKKQSNWRRKHEEFIATIRAAKSINQVIKDGGPLPPPPPPSYDPDYIQCPYCQRRFGENAADRHIKFCKEQASRISNKSKLAGGDKTKPPARTQYKPPAPKKANSPTASSVSSRLPQRSAYGQGAGTGIPSSKPSSTGSIKSTPSGYSPLRNNSSSLTSPPSEGNMKPKGMVSQSSLRNPSTGIGMNKKKIQNADNCISRNDMKNENDFNYSTTGTKFCHECGTKYPVESAKFCCECGVKRMYI.

The segment at 13-42 (ELVPCKICGRSFFPKVLKKHVPICQKTAAK) adopts a C2HC/C3H-type 1 zinc-finger fold. Zn(2+)-binding residues include cysteine 17, cysteine 20, histidine 32, and cysteine 36. 2 disordered regions span residues 40–96 (AAKR…KHEE) and 108–131 (NQVI…DYIQ). Over residues 46 to 56 (VFDSGRQRAEG) the composition is skewed to basic and acidic residues. Over residues 63 to 76 (KPIKPKLQSSSSSS) the composition is skewed to low complexity. The segment covering 116-125 (PLPPPPPPSY) has biased composition (pro residues). The C2HC/C3H-type 2 zinc-finger motif lies at 128-157 (DYIQCPYCQRRFGENAADRHIKFCKEQASR). Residues cysteine 132, cysteine 135, histidine 147, and cysteine 151 each coordinate Zn(2+). The tract at residues 154–271 (QASRISNKSK…NPSTGIGMNK (118 aa)) is disordered. The span at 187–199 (NSPTASSVSSRLP) shows a compositional bias: polar residues. Residues 211 to 229 (GIPSSKPSSTGSIKSTPSG) show a composition bias toward low complexity. 2 stretches are compositionally biased toward polar residues: residues 233 to 245 (LRNN…SPPS) and 255 to 267 (VSQS…STGI).

Belongs to the ZC2HC1 family. Zn(2+) serves as cofactor.

This Danio rerio (Zebrafish) protein is Zinc finger C2HC domain-containing protein 1A (zc2hc1a).